The chain runs to 220 residues: Phosphoribosylformylglycinamidine synthase subunit PurQ (220 aa).

One can recognise a Glutamine amidotransferase type-1 domain in the interval 2-220; it reads RVGVVVFPGS…LRSVLAGAKV (219 aa). C85 serves as the catalytic Nucleophile. Active-site residues include H193 and E195.

In terms of assembly, part of the FGAM synthase complex composed of 1 PurL, 1 PurQ and 2 PurS subunits.

It localises to the cytoplasm. The catalysed reaction is N(2)-formyl-N(1)-(5-phospho-beta-D-ribosyl)glycinamide + L-glutamine + ATP + H2O = 2-formamido-N(1)-(5-O-phospho-beta-D-ribosyl)acetamidine + L-glutamate + ADP + phosphate + H(+). It catalyses the reaction L-glutamine + H2O = L-glutamate + NH4(+). The protein operates within purine metabolism; IMP biosynthesis via de novo pathway; 5-amino-1-(5-phospho-D-ribosyl)imidazole from N(2)-formyl-N(1)-(5-phospho-D-ribosyl)glycinamide: step 1/2. In terms of biological role, part of the phosphoribosylformylglycinamidine synthase complex involved in the purines biosynthetic pathway. Catalyzes the ATP-dependent conversion of formylglycinamide ribonucleotide (FGAR) and glutamine to yield formylglycinamidine ribonucleotide (FGAM) and glutamate. The FGAM synthase complex is composed of three subunits. PurQ produces an ammonia molecule by converting glutamine to glutamate. PurL transfers the ammonia molecule to FGAR to form FGAM in an ATP-dependent manner. PurS interacts with PurQ and PurL and is thought to assist in the transfer of the ammonia molecule from PurQ to PurL. The chain is Phosphoribosylformylglycinamidine synthase subunit PurQ from Rubrobacter xylanophilus (strain DSM 9941 / JCM 11954 / NBRC 16129 / PRD-1).